The chain runs to 139 residues: Probable cytochrome b5 (139 aa).

The Cytochrome b5 heme-binding domain maps to 2-78 (SAEFTYQDVA…LEPLLVGTLK (77 aa)). Positions 37 and 61 each coordinate heme. The chain crosses the membrane as a helical span at residues 105–125 (GLGIGLYAVLVLGGLAGFAAY).

The protein belongs to the cytochrome b5 family.

It localises to the endoplasmic reticulum membrane. Its subcellular location is the microsome membrane. In terms of biological role, membrane bound hemoprotein which function as an electron carrier for several membrane bound oxygenases. The chain is Probable cytochrome b5 from Neurospora crassa (strain ATCC 24698 / 74-OR23-1A / CBS 708.71 / DSM 1257 / FGSC 987).